The chain runs to 1339 residues: Astrotactin-2 (1339 aa).

The first 49 residues, 1–49, serve as a signal peptide directing secretion; sequence MAAAGARLSPGPGSGLRGRPRLCFHPGPPPLLPLLLLFLLLLPPPPLLA. Topologically, residues 50-206 are lumenal; that stretch reads GATAAASREP…IVEEQMHILH (157 aa). N168 carries an N-linked (GlcNAc...) asparagine glycan. The chain crosses the membrane as a helical span at residues 207–227; sequence ISVMGGLIALLLLLLVFTVAL. Over 228 to 434 the chain is Cytoplasmic; the sequence is YAQRRWQKRR…KGLLKSPVNK (207 aa). Disordered stretches follow at residues 296–316 and 363–408; these read EEDE…EFGS and TPIE…ADDE. Residues 435-455 traverse the membrane as a helical segment; that stretch reads TALTLIAVSSCILAMVCGSQM. Residues 456 to 1339 lie on the Lumenal side of the membrane; that stretch reads SCPLTVKVTL…RNTYGESKGR (884 aa). EGF-like domains follow at residues 510–550, 651–695, and 699–751; these read VRDL…HLCV, PVRD…SGCY, and KGID…KSCL. 9 cysteine pairs are disulfide-bonded: C514–C526, C522–C533, C535–C549, C655–C668, C662–C679, C681–C694, C703–C715, C711–C735, and C737–C750. N770 and N783 each carry an N-linked (GlcNAc...) asparagine glycan. 3 disulfide bridges follow: C825-C987, C916-C977, and C983-C990. An N-linked (GlcNAc...) asparagine glycan is attached at N1020. 5 disulfides stabilise this stretch: C1036-C1047, C1049-C1062, C1136-C1158, C1190-C1277, and C1298-C1321. Residues 1065 to 1188 enclose the Fibronectin type-III domain; the sequence is LLQPVLRLSP…SELSTVTLRT (124 aa).

It belongs to the astrotactin family. In terms of assembly, interacts with ASTN1; the interaction is not calcium-dependent.

It is found in the membrane. Its subcellular location is the perikaryon. The protein localises to the cytoplasm. It localises to the cell cortex. The protein resides in the early endosome. It is found in the late endosome. Its subcellular location is the cytoplasmic vesicle. The protein localises to the clathrin-coated vesicle. Its function is as follows. Mediates recycling of the neuronal cell adhesion molecule ASTN1 to the anterior pole of the cell membrane in migrating neurons. Promotes ASTN1 internalization and intracellular transport of endocytosed ASTN1. Selectively binds inositol-4,5-bisphosphate, inositol-3,4,5-trisphosphate and inositol-1,3,4,5-tetrakisphosphate, suggesting it is recruited to membranes that contain lipids with a phosphoinositide headgroup. In Homo sapiens (Human), this protein is Astrotactin-2 (ASTN2).